Consider the following 158-residue polypeptide: Transcription factor BTF3 homolog 4 (158 aa).

The 66-residue stretch at 33–98 (TADDKKLQSS…AEAKPITEML (66 aa)) folds into the NAC-A/B domain. The segment at 124–158 (VLDSKAPKSEDIDEEDDDVPDLAENFDEASKNEAN) is disordered. Residues 134-150 (DIDEEDDDVPDLAENFD) show a composition bias toward acidic residues.

Belongs to the NAC-beta family.

This chain is Transcription factor BTF3 homolog 4 (BTF3L4), found in Gallus gallus (Chicken).